The sequence spans 72 residues: Translation initiation factor IF-1 (72 aa).

An S1-like domain is found at 1–72 (MAKEDVIEFS…TKGRITFRYK (72 aa)).

This sequence belongs to the IF-1 family. In terms of assembly, component of the 30S ribosomal translation pre-initiation complex which assembles on the 30S ribosome in the order IF-2 and IF-3, IF-1 and N-formylmethionyl-tRNA(fMet); mRNA recruitment can occur at any time during PIC assembly.

Its subcellular location is the cytoplasm. Functionally, one of the essential components for the initiation of protein synthesis. Stabilizes the binding of IF-2 and IF-3 on the 30S subunit to which N-formylmethionyl-tRNA(fMet) subsequently binds. Helps modulate mRNA selection, yielding the 30S pre-initiation complex (PIC). Upon addition of the 50S ribosomal subunit IF-1, IF-2 and IF-3 are released leaving the mature 70S translation initiation complex. The chain is Translation initiation factor IF-1 from Paramagnetospirillum magneticum (strain ATCC 700264 / AMB-1) (Magnetospirillum magneticum).